A 676-amino-acid chain; its full sequence is Pre-mRNA-splicing factor CLF1 (676 aa).

16 HAT repeats span residues 46 to 78 (EYQG…WELE), 80 to 112 (REFA…CELK), 114 to 146 (KNIN…TEET), 148 to 179 (GNIA…MEKR), 181 to 212 (REFD…FEME), 215 to 255 (NRDT…FETR), 257 to 291 (REYE…FEKQ), 301 to 333 (VVLT…LGQE), 336 to 369 (LEAD…LWIK), 379 to 415 (KEVE…FEIR), 417 to 449 (GNLP…LEAK), 451 to 483 (REFD…LEQM), 485 to 519 (GDEE…FEAE), 521 to 553 (ENYD…FEVT), 576 to 614 (EAKA…FEEE), and 620 to 652 (SKAD…YVFP). Residues 616–628 (GDDKSKADLDKRK) are compositionally biased toward basic and acidic residues. Residues 616–636 (GDDKSKADLDKRKPTPVKKKR) form a disordered region.

Belongs to the crooked-neck family. Associated with the spliceosome.

The protein localises to the nucleus. Its function is as follows. Involved in pre-mRNA splicing and cell cycle progression. Required for the spliceosome assembly and initiation of the DNA replication. This Yarrowia lipolytica (strain CLIB 122 / E 150) (Yeast) protein is Pre-mRNA-splicing factor CLF1 (CLF1).